The chain runs to 146 residues: MAAYLLAVAILFCIQGWPSGTVQGQVMPFMEVYSRSACQTRETLVPILKEYPDEVSHLFKPSCVPVLRCGGCCSDESLTCTATGKHSVGREIMRVDPHKGTSKMEVMQFKEHTACECRPRSPGDVNNGKDKRNPEEGGPRARFPFV.

Positions 1–24 (MAAYLLAVAILFCIQGWPSGTVQG) are cleaved as a signal peptide. Position 25 is a pyrrolidone carboxylic acid (Q25). 3 disulfides stabilise this stretch: C38/C80, C69/C115, and C73/C117. The span at 118–139 (RPRSPGDVNNGKDKRNPEEGGP) shows a compositional bias: basic and acidic residues. The segment at 118 to 146 (RPRSPGDVNNGKDKRNPEEGGPRARFPFV) is disordered.

It belongs to the PDGF/VEGF growth factor family. Snake venom VEGF subfamily. Homodimer; disulfide-linked. Interacts with VEGF receptor-1 (FLT1) with a high affinity, whereas it binds to VEGF receptor-2 (KDR) with a low affinity. Does not bind VEGF receptor-3 (FLT4). Expressed by the venom gland.

The protein resides in the secreted. Its function is as follows. Snake venom VEGFs may contribute to venom dispersion and prey subjugation by inducing vascular permeability and hypotension. This protein strongly increases vascular permeability, and weakly stimulates angiogenesis. Interacts with VEGF receptor-1 (FLT1) with a high affinity, whereas it binds to VEGF receptor-2 (KDR) with a low affinity. Stimulates autophosphorylation of VEGF receptor-1 (VEGFR-1/FLT1), and VEGF receptor-2 (VEGFR-2/KDR). The protein is Snake venom vascular endothelial growth factor toxin TfsvVEGF of Protobothrops flavoviridis (Habu).